The chain runs to 945 residues: Leucine--tRNA ligase (945 aa).

The short motif at 43–53 (PYPNGAIHIGH) is the 'HIGH' region element. The short motif at 638 to 642 (KMSKS) is the 'KMSKS' region element. K641 contributes to the ATP binding site.

It belongs to the class-I aminoacyl-tRNA synthetase family.

The protein resides in the cytoplasm. The enzyme catalyses tRNA(Leu) + L-leucine + ATP = L-leucyl-tRNA(Leu) + AMP + diphosphate. The chain is Leucine--tRNA ligase from Pyrobaculum arsenaticum (strain DSM 13514 / JCM 11321 / PZ6).